The sequence spans 499 residues: Cysteine--tRNA ligase (499 aa).

Cys-29 lines the Zn(2+) pocket. A 'HIGH' region motif is present at residues 31-41 (VTVYDLCHLGH). Zn(2+) contacts are provided by Cys-213, His-238, and Glu-242. The short motif at 270–274 (KMSKS) is the 'KMSKS' region element. Lys-273 is a binding site for ATP.

This sequence belongs to the class-I aminoacyl-tRNA synthetase family. Monomer. The cofactor is Zn(2+).

Its subcellular location is the cytoplasm. The catalysed reaction is tRNA(Cys) + L-cysteine + ATP = L-cysteinyl-tRNA(Cys) + AMP + diphosphate. The chain is Cysteine--tRNA ligase from Prochlorococcus marinus (strain MIT 9303).